Reading from the N-terminus, the 366-residue chain is 5-hydroxytryptamine receptor 1F (366 aa).

Residues 1–24 lie on the Extracellular side of the membrane; that stretch reads MDFLNSSDQNLTSEELLNRMPSKI. N-linked (GlcNAc...) asparagine glycans are attached at residues Asn-5 and Asn-10. The helical transmembrane segment at 25–49 threads the bilayer; sequence LVSLTLSGLALMTTTINCLVITAII. At 50-59 the chain is on the cytoplasmic side; it reads VTRKLHHPAN. A helical transmembrane segment spans residues 60–81; that stretch reads YLICSLAVTDFLVAVLVMPFSI. Residues 82–96 are Extracellular-facing; it reads VYIVRESWIMGQGLC. Cys-96 and Cys-172 form a disulfide bridge. Residues 97 to 119 traverse the membrane as a helical segment; it reads DLWLSVDIICCTCSILHLSAIAL. Residues Asp-103 and Cys-107 each contribute to the serotonin site. The short motif at 120 to 122 is the DRY motif; important for ligand-induced conformation changes element; the sequence is DRY. Residues 120–139 lie on the Cytoplasmic side of the membrane; sequence DRYRAITDAVEYARKRTPRH. A helical membrane pass occupies residues 140–159; the sequence is AGITITTVWVISVFISVPPL. At 160–178 the chain is on the extracellular side; sequence FWRHQGNSRDDQCIIKHDH. Residues 179–202 form a helical membrane-spanning segment; the sequence is IVSTIYSTFGAFYIPLVLILILYY. Residues 203-291 are Cytoplasmic-facing; sequence KIYRAARTLY…KISGTRERKA (89 aa). The helical transmembrane segment at 292–315 threads the bilayer; sequence ATTLGLILGAFVICWLPFFVKELV. Residues 316–327 lie on the Extracellular side of the membrane; that stretch reads VNICEKCKISEE. A helical transmembrane segment spans residues 328-350; the sequence is MSNFLAWLGYLNSLINPLIYTIF. An NPxxY motif; important for ligand-induced conformation changes and signaling motif is present at residues 343–347; the sequence is NPLIY. The Cytoplasmic portion of the chain corresponds to 351–366; that stretch reads NEDFKKAFQKLVRCRN.

The protein belongs to the G-protein coupled receptor 1 family.

The protein localises to the cell membrane. In terms of biological role, G-protein coupled receptor for 5-hydroxytryptamine (serotonin). Also functions as a receptor for various alkaloids and psychoactive substances. Ligand binding causes a conformation change that triggers signaling via guanine nucleotide-binding proteins (G proteins) and modulates the activity of downstream effectors, such as adenylate cyclase. HTR1F is coupled to G(i)/G(o) G alpha proteins and mediates inhibitory neurotransmission by inhibiting adenylate cyclase activity. This is 5-hydroxytryptamine receptor 1F (Htr1f) from Rattus norvegicus (Rat).